Here is a 251-residue protein sequence, read N- to C-terminus: Haloacid dehalogenase-like hydrolase domain-containing protein 3 (251 aa).

Lysine 15 bears the N6-acetyllysine; alternate mark. Lysine 15 carries the post-translational modification N6-succinyllysine; alternate.

The protein belongs to the HAD-like hydrolase superfamily.

The polypeptide is Haloacid dehalogenase-like hydrolase domain-containing protein 3 (HDHD3) (Homo sapiens (Human)).